The sequence spans 696 residues: MTPTSRTPPERAAELRQLLNQAAHSYYVLDTPTMEDAVYDRLYRELLDLEVKDSSLLTPDSPTQRIGGAPAQGFASVPHRIPLLSLDNAFNVDELTGWYVRLVKLLGYQTNPKTPQPDLSMVGELKIDGNALALSYEHGVLIRAATRGDGANGEEITANVRTIASIPLRLQLVHPPAWLEVRGEAFIPNSTFADINTARGERGDVAFANPRNACAGTLRQLDPKVVASRQLDFFAYTLHLPDNWQAKADDPASPMNQWAVLQWLQAIGFKVNPNTALLTDLTAVEHFFKLWDEARHQLPYATDGVVVKLNDLQLQETAGFTQKAPRWAIALKYAAEEAPSKLLRLTCQVGRTGAVTPVAEFEAIPLAGTSVSRATLHNANRVSELDLHSGDTIVVRKAGEIIPEVIGVLRELRPAGAQTLKLPHICPECRSDLVREEGEAATRCVNNSCPAILRGTLRHWVSKGALDVDGLGSKLIEQLVNRGLVQSIADLYALEASLLASMDRMGNKSTENLITALQASKSKPWHKQLYGLGIHHVGEVNAKALAKKFPSAATLANAACKAPEQITSVFGVGNEIAQSLQQWFATPANQELLAKLKQLGISLEANEDELAHDTDQKQRTVSLQGQTFVLTGTLPTLSRSEAQALIEAAGGKVNSSVSKNTSYVVAGAEAGSKLNKAEKLRVTVLNEEELLKLLAS.

NAD(+)-binding positions include 36–40 (DAVYD), 85–86 (SL), and Glu-124. The N6-AMP-lysine intermediate role is filled by Lys-126. Arg-147, Glu-184, Lys-308, and Lys-332 together coordinate NAD(+). 4 residues coordinate Zn(2+): Cys-426, Cys-429, Cys-444, and Cys-449. Residues 618-696 (QRTVSLQGQT…EEELLKLLAS (79 aa)) enclose the BRCT domain.

Belongs to the NAD-dependent DNA ligase family. LigA subfamily. Requires Mg(2+) as cofactor. Mn(2+) serves as cofactor.

It carries out the reaction NAD(+) + (deoxyribonucleotide)n-3'-hydroxyl + 5'-phospho-(deoxyribonucleotide)m = (deoxyribonucleotide)n+m + AMP + beta-nicotinamide D-nucleotide.. DNA ligase that catalyzes the formation of phosphodiester linkages between 5'-phosphoryl and 3'-hydroxyl groups in double-stranded DNA using NAD as a coenzyme and as the energy source for the reaction. It is essential for DNA replication and repair of damaged DNA. The protein is DNA ligase of Prochlorococcus marinus (strain MIT 9303).